A 418-amino-acid polypeptide reads, in one-letter code: Gamma-glutamyl phosphate reductase (418 aa).

Belongs to the gamma-glutamyl phosphate reductase family.

It is found in the cytoplasm. It carries out the reaction L-glutamate 5-semialdehyde + phosphate + NADP(+) = L-glutamyl 5-phosphate + NADPH + H(+). It functions in the pathway amino-acid biosynthesis; L-proline biosynthesis; L-glutamate 5-semialdehyde from L-glutamate: step 2/2. Catalyzes the NADPH-dependent reduction of L-glutamate 5-phosphate into L-glutamate 5-semialdehyde and phosphate. The product spontaneously undergoes cyclization to form 1-pyrroline-5-carboxylate. The polypeptide is Gamma-glutamyl phosphate reductase (Chlorobium chlorochromatii (strain CaD3)).